Consider the following 439-residue polypeptide: sn-glycerol-3-phosphate-binding periplasmic protein UgpB (439 aa).

An N-terminal signal peptide occupies residues 1–25 (MFNNSIHKVSICIALTLTFSANAMA). Positions 67, 91, 146, 272, 309, 348, and 399 each coordinate sn-glycerol 3-phosphate.

This sequence belongs to the bacterial solute-binding protein 1 family. In terms of assembly, the complex is composed of two ATP-binding proteins (UgpC), two transmembrane proteins (UgpA and UgpE) and a solute-binding protein (UgpB).

Its subcellular location is the periplasm. Its function is as follows. Part of the ABC transporter complex UgpBAEC involved in sn-glycerol-3-phosphate (G3P) import. Binds G3P. This is sn-glycerol-3-phosphate-binding periplasmic protein UgpB (ugpB) from Yersinia pestis bv. Antiqua (strain Antiqua).